Consider the following 396-residue polypeptide: Phosphoglycerate kinase (396 aa).

Substrate contacts are provided by residues 21 to 23 (DFN), R36, 59 to 62 (HLGK), R119, and R156. ATP-binding positions include K206, G294, E325, and 352 to 355 (GGDS).

The protein belongs to the phosphoglycerate kinase family. As to quaternary structure, monomer.

Its subcellular location is the cytoplasm. It catalyses the reaction (2R)-3-phosphoglycerate + ATP = (2R)-3-phospho-glyceroyl phosphate + ADP. The protein operates within carbohydrate degradation; glycolysis; pyruvate from D-glyceraldehyde 3-phosphate: step 2/5. In Listeria monocytogenes serotype 4a (strain HCC23), this protein is Phosphoglycerate kinase.